A 64-amino-acid chain; its full sequence is Small ribosomal subunit protein bS21 (64 aa).

Positions 42–64 (KKEKEKAAAKKRNKYNKRRSFYY) are disordered. Residues 50–64 (AKKRNKYNKRRSFYY) show a composition bias toward basic residues.

Belongs to the bacterial ribosomal protein bS21 family.

In Malacoplasma penetrans (strain HF-2) (Mycoplasma penetrans), this protein is Small ribosomal subunit protein bS21.